A 701-amino-acid chain; its full sequence is CRS2-associated factor 1, chloroplastic (701 aa).

The N-terminal 77 residues, 1–77, are a transit peptide targeting the chloroplast; that stretch reads MATSHLTSRS…ENGEPAAGVR (77 aa). CRM domains follow at residues 183–279 and 301–397; these read EPLT…TRPI and DGLT…LPPL. The tract at residues 581 to 603 is CRS2 binding; sequence GILLLFKQAIDSGMALVLNENEF.

Interacts with CRS2 and RNA. Part of large ribonucleo-protein complexes that include group IIB introns, CRS2 and CAF1.

The protein resides in the plastid. It is found in the chloroplast stroma. In terms of biological role, required for the splicing of group IIB introns in chloroplasts. Forms splicing particles with CRS2. Interacts with RNA and confers intron specificity of the splicing particles. The protein is CRS2-associated factor 1, chloroplastic of Oryza sativa subsp. japonica (Rice).